The following is a 379-amino-acid chain: Programmed cell death protein 2-like (379 aa).

The protein is Programmed cell death protein 2-like (PDCD2L) of Gallus gallus (Chicken).